The following is a 389-amino-acid chain: Alkanesulfonate monooxygenase (389 aa).

Belongs to the SsuD family.

It catalyses the reaction an alkanesulfonate + FMNH2 + O2 = an aldehyde + FMN + sulfite + H2O + 2 H(+). Functionally, catalyzes the desulfonation of aliphatic sulfonates. In Agrobacterium fabrum (strain C58 / ATCC 33970) (Agrobacterium tumefaciens (strain C58)), this protein is Alkanesulfonate monooxygenase.